A 91-amino-acid chain; its full sequence is MASVSISCPSCSATDGVVRNGKSTAGHQRYLCSHCRKTWQLQFTYTASQPGTHQKIIDMAMNGVGCRATARIMGVGLNTIFRHLKNSGRSR.

The protein belongs to the IS1 elements InsA family.

Functionally, absolutely required for transposition of IS1. The chain is Insertion element IS1 2 protein InsA (insA2) from Escherichia coli (strain K12).